The chain runs to 194 residues: uncharacterized protein (194 aa).

One can recognise an SIS domain in the interval 34–192 (VMQCLLGGNK…CELVDQTLFP (159 aa)).

Belongs to the SIS family. DiaA subfamily.

This is an uncharacterized protein from Haemophilus influenzae (strain ATCC 51907 / DSM 11121 / KW20 / Rd).